We begin with the raw amino-acid sequence, 562 residues long: Potassium voltage-gated channel subfamily V member 2 (562 aa).

The span at 1–10 shows a compositional bias: basic and acidic residues; the sequence is MLKQSNERRW. The segment at 1 to 34 is disordered; the sequence is MLKQSNERRWSLSYKPWSTPETEDVPNTGSNQHR. Topologically, residues 1–163 are cytoplasmic; the sequence is MLKQSNERRW…TDEYFFDRDP (163 aa). Residues 164-184 traverse the membrane as a helical segment; sequence AVFQLIYNFYTSGVLLVRDEL. Residues 185 to 269 lie on the Extracellular side of the membrane; the sequence is CPRSFLEELG…KPFSSVAAKA (85 aa). Residues 270–290 form a helical membrane-spanning segment; sequence MGVATNLFVLISVVALALNTV. The Cytoplasmic portion of the chain corresponds to 291–344; sequence EEMQHQAEQGTGGGDPRPILEHVEMLCVAFFTLEFLLRLASTPNLQRFARSALN. The chain crosses the membrane as a helical span at residues 345–365; it reads LVDLVAILPFYLQLLLECFTS. At 366–391 the chain is on the extracellular side; sequence EDQRHNKDSPREHDLETVGRVGKVGQ. A helical; Voltage-sensor membrane pass occupies residues 392–412; that stretch reads VLRIMRLMRIFRILKLARHST. Residues 413–427 are Cytoplasmic-facing; the sequence is GLRAFGFTLRQCYQQ. Residues 428-448 traverse the membrane as a helical segment; it reads VGCLMLFITMGIFSFSAAVYS. Topologically, residues 449–461 are extracellular; the sequence is VEHDVPGTNFTSI. N-linked (GlcNAc...) asparagine glycosylation is present at Asn-457. An intramembrane region (pore-forming) is located at residues 462-482; that stretch reads LHAWWWAAVSISTVGYGDMYP. Positions 474 to 479 match the Selectivity filter motif; it reads TVGYGD. Over 483–488 the chain is Extracellular; it reads ETHLGR. The chain crosses the membrane as a helical span at residues 489–509; that stretch reads LFAFLCIAFGIILNGMPISIL. The Cytoplasmic segment spans residues 510–562; the sequence is YNKFSDYYSKLKAYEYTAIRRERGKVNFMQRATKKMAECLSESHAQSTTRQEN.

It belongs to the potassium channel family. V (TC 1.A.1.2) subfamily. Kv8.2/KCNV2 sub-subfamily. In terms of assembly, heteromultimer with KCNB1, KCNC1 and KCNF1. Does not form homomultimers.

It localises to the cell membrane. In terms of biological role, potassium channel subunit. Modulates channel activity by shifting the threshold and the half-maximal activation to more negative values. This chain is Potassium voltage-gated channel subfamily V member 2 (Kcnv2), found in Mus musculus (Mouse).